The primary structure comprises 90 residues: MSEEQLKAFIAKVQADTSLQEQLKVEGADVVAIAKASGFAITTEDLKAHQANSQKNLSDAELEGVAGGTIGGTIVSITCETCDLLVGKMC.

The propeptide occupies Met1 to Gly68. Thr69 and Thr73 each carry 2,3-didehydrobutyrine. Residues Ser76–Cys79 constitute a cross-link (lanthionine (Ser-Cys)). Cross-links (beta-methyllanthionine (Thr-Cys)) lie at residues Thr78–Cys82 and Thr81–Cys90.

Cross-links are proved in vitro, when coepressed in E.coli with the ProcM lanthionine synthetase. In terms of processing, the lanthionine residue has a DL configuration (with 2S,6R stereochemistry), whereas the beta-methyllanthionine residues have a DL configuration (with 2S,3S,6R stereochemistry). Post-translationally, maturation of prochlorosin involves the enzymatic conversion of Thr, and Ser into dehydrated AA and the formation of thioether bonds with cysteines. This is followed by membrane translocation and cleavage of the modified precursor.

The protein localises to the secreted. Its function is as follows. Lanthionine-containing peptide (lantipeptide) with unknown function. Does not show antibiotic activity against Lactococcus lactis 117 and Bacillus subtilis 6633 bacteria. Organisms that produce this peptide live in oligotrophic environments at very dilute concentrations, suggesting this peptide is not secreted to influence other bacteria. The polypeptide is Lantipeptide prochlorosin 1.7 (Prochlorococcus marinus (strain MIT 9313)).